Here is a 377-residue protein sequence, read N- to C-terminus: Cobalt-precorrin-5B C(1)-methyltransferase (377 aa).

It belongs to the CbiD family.

The enzyme catalyses Co-precorrin-5B + S-adenosyl-L-methionine = Co-precorrin-6A + S-adenosyl-L-homocysteine. The protein operates within cofactor biosynthesis; adenosylcobalamin biosynthesis; cob(II)yrinate a,c-diamide from sirohydrochlorin (anaerobic route): step 6/10. Its function is as follows. Catalyzes the methylation of C-1 in cobalt-precorrin-5B to form cobalt-precorrin-6A. The polypeptide is Cobalt-precorrin-5B C(1)-methyltransferase (Alkaliphilus metalliredigens (strain QYMF)).